A 465-amino-acid polypeptide reads, in one-letter code: Ribosomal oxygenase 2 (465 aa).

In terms of domain architecture, JmjC spans 139–271 (QPQRFKDELW…NSWGDFLLDT (133 aa)). His179, Asp181, and His240 together coordinate Fe cation. A Phosphoserine modification is found at Ser309.

This sequence belongs to the ROX family. MINA53 subfamily. Fe(2+) is required as a cofactor.

The protein resides in the nucleus. It localises to the nucleolus. It carries out the reaction L-histidyl-[ribosomal protein uL15] + 2-oxoglutarate + O2 = (3S)-3-hydroxy-L-histidyl-[ribosomal protein uL15] + succinate + CO2. The catalysed reaction is L-histidyl-[protein] + 2-oxoglutarate + O2 = (3S)-3-hydroxy-L-histidyl-[protein] + succinate + CO2. Its function is as follows. Oxygenase that can act as both a histone lysine demethylase and a ribosomal histidine hydroxylase. Is involved in the demethylation of trimethylated 'Lys-9' on histone H3 (H3K9me3), leading to an increase in ribosomal RNA expression. Also catalyzes the hydroxylation of 60S ribosomal protein L27a on 'His-39'. May play an important role in cell growth and survival. May be involved in ribosome biogenesis, most likely during the assembly process of pre-ribosomal particles. This Pongo abelii (Sumatran orangutan) protein is Ribosomal oxygenase 2 (RIOX2).